Here is a 147-residue protein sequence, read N- to C-terminus: 3-dehydroquinate dehydratase (147 aa).

Tyr-24 serves as the catalytic Proton acceptor. Substrate-binding residues include Asn-75, His-81, and Asp-88. His-101 (proton donor) is an active-site residue. Residues 102–103 (IS) and Arg-112 contribute to the substrate site.

Belongs to the type-II 3-dehydroquinase family. As to quaternary structure, homododecamer.

It carries out the reaction 3-dehydroquinate = 3-dehydroshikimate + H2O. Its pathway is metabolic intermediate biosynthesis; chorismate biosynthesis; chorismate from D-erythrose 4-phosphate and phosphoenolpyruvate: step 3/7. Its function is as follows. Catalyzes a trans-dehydration via an enolate intermediate. The protein is 3-dehydroquinate dehydratase of Cereibacter sphaeroides (strain KD131 / KCTC 12085) (Rhodobacter sphaeroides).